Reading from the N-terminus, the 387-residue chain is MTSEKKRVLIIGGGYGGCEVAKQLDSKFNVTVVERKQTFFHSVGSVRAVVEPELVKKIYIPYDKLLKNGKFIFGTVIEISPTLAKLEDGQELTFDYLVIATGSNSLAPFKAPLEKKSSSEILNYFQNFSQQIKQAKSILIVGGGAVACELVSEIVEKYPVKDSELVKKITIVHSGSKLVNPKMNDKFTNVVSKAMKKRNVEVILNDRITMPDEIKANLLNQTSPNIQISSQNYTTEKGVPIQADLIIWTVGIKTNSESYQSHFSNVINESGQLKVNLSCQVQGYNNVFAIGDCTDFDEFKTAYNAGYHAAIAAKAIDALSKGKSNDKLAKHKVSGPILSLSLGPQDGITQISPTMCLGSFATKMIKSKSLFIDRYISQLNNPKPLIQ.

Residues 12–16 (GGGYG), Arg47, and Asp292 each bind FAD.

The protein belongs to the FAD-dependent oxidoreductase family. It depends on FAD as a cofactor.

Its function is as follows. Putative FAD-dependent oxidoreductase. In Dictyostelium discoideum (Social amoeba), this protein is Apoptosis-inducing factor homolog B (aifB).